A 490-amino-acid polypeptide reads, in one-letter code: Betaine aldehyde dehydrogenase (490 aa).

D93 is a binding site for K(+). An NAD(+)-binding site is contributed by 150 to 152 (GAW). K162 acts as the Charge relay system in catalysis. Residue 176 to 179 (KPSE) coordinates NAD(+). V180 provides a ligand contact to K(+). 230 to 233 (GIAS) provides a ligand contact to NAD(+). L246 is a binding site for K(+). The active-site Proton acceptor is the E252. NAD(+) contacts are provided by G254, C286, and E387. The active-site Nucleophile is C286. C286 is subject to Cysteine sulfenic acid (-SOH). 2 residues coordinate K(+): K457 and G460. E464 acts as the Charge relay system in catalysis.

This sequence belongs to the aldehyde dehydrogenase family. As to quaternary structure, dimer of dimers. Requires K(+) as cofactor.

It catalyses the reaction betaine aldehyde + NAD(+) + H2O = glycine betaine + NADH + 2 H(+). It participates in amine and polyamine biosynthesis; betaine biosynthesis via choline pathway; betaine from betaine aldehyde: step 1/1. Its function is as follows. Involved in the biosynthesis of the osmoprotectant glycine betaine. Catalyzes the irreversible oxidation of betaine aldehyde to the corresponding acid. This chain is Betaine aldehyde dehydrogenase, found in Yersinia pseudotuberculosis serotype O:3 (strain YPIII).